Here is a 337-residue protein sequence, read N- to C-terminus: Cytidine deaminase 2 (337 aa).

2 CMP/dCMP-type deaminase domains span residues 43 to 164 (TDPI…FSSL) and 199 to 320 (LDCS…LKYL). Substrate is bound at residue 84-86 (NVD). Residue His-97 participates in Zn(2+) binding. The active-site Proton donor is the Glu-99. The Zn(2+) site is built by Cys-132 and Cys-135.

It belongs to the cytidine and deoxycytidylate deaminase family. In terms of assembly, homodimer. Zn(2+) is required as a cofactor.

The catalysed reaction is cytidine + H2O + H(+) = uridine + NH4(+). The enzyme catalyses 2'-deoxycytidine + H2O + H(+) = 2'-deoxyuridine + NH4(+). In terms of biological role, this enzyme scavenges exogenous and endogenous cytidine and 2'-deoxycytidine for UMP synthesis. This is Cytidine deaminase 2 (CDA2) from Arabidopsis thaliana (Mouse-ear cress).